Consider the following 142-residue polypeptide: Small ribosomal subunit protein uS12 (142 aa).

Belongs to the universal ribosomal protein uS12 family. As to quaternary structure, part of the 30S ribosomal subunit.

With S4 and S5 plays an important role in translational accuracy. Located at the interface of the 30S and 50S subunits. In Methanocorpusculum labreanum (strain ATCC 43576 / DSM 4855 / Z), this protein is Small ribosomal subunit protein uS12.